Consider the following 375-residue polypeptide: 23S rRNA (uracil(747)-C(5))-methyltransferase RlmC (375 aa).

Cysteine 3, cysteine 11, cysteine 14, and cysteine 87 together coordinate [4Fe-4S] cluster. Residues glutamine 212, phenylalanine 241, glutamate 262, and asparagine 307 each contribute to the S-adenosyl-L-methionine site. Cysteine 334 functions as the Nucleophile in the catalytic mechanism.

It belongs to the class I-like SAM-binding methyltransferase superfamily. RNA M5U methyltransferase family. RlmC subfamily.

It carries out the reaction uridine(747) in 23S rRNA + S-adenosyl-L-methionine = 5-methyluridine(747) in 23S rRNA + S-adenosyl-L-homocysteine + H(+). Catalyzes the formation of 5-methyl-uridine at position 747 (m5U747) in 23S rRNA. The polypeptide is 23S rRNA (uracil(747)-C(5))-methyltransferase RlmC (Salmonella paratyphi A (strain ATCC 9150 / SARB42)).